Consider the following 374-residue polypeptide: Probable phosphoserine aminotransferase (374 aa).

Arg-48 provides a ligand contact to L-glutamate. Residues 82–83 (AS), Trp-110, Thr-160, Asp-183, and Gln-206 contribute to the pyridoxal 5'-phosphate site. Lys-207 is subject to N6-(pyridoxal phosphate)lysine. A pyridoxal 5'-phosphate-binding site is contributed by 248–249 (NT).

The protein belongs to the class-V pyridoxal-phosphate-dependent aminotransferase family. SerC subfamily. As to quaternary structure, homodimer. Requires pyridoxal 5'-phosphate as cofactor.

The enzyme catalyses O-phospho-L-serine + 2-oxoglutarate = 3-phosphooxypyruvate + L-glutamate. The catalysed reaction is 4-(phosphooxy)-L-threonine + 2-oxoglutarate = (R)-3-hydroxy-2-oxo-4-phosphooxybutanoate + L-glutamate. Its pathway is amino-acid biosynthesis; L-serine biosynthesis; L-serine from 3-phospho-D-glycerate: step 2/3. It functions in the pathway cofactor biosynthesis; pyridoxine 5'-phosphate biosynthesis; pyridoxine 5'-phosphate from D-erythrose 4-phosphate: step 3/5. Functionally, catalyzes the reversible conversion of 3-phosphohydroxypyruvate to phosphoserine and of 3-hydroxy-2-oxo-4-phosphonooxybutanoate to phosphohydroxythreonine. This is Probable phosphoserine aminotransferase (serC) from Dictyostelium discoideum (Social amoeba).